The primary structure comprises 235 residues: Large ribosomal subunit protein uL1 (235 aa).

Belongs to the universal ribosomal protein uL1 family. As to quaternary structure, part of the 50S ribosomal subunit.

Functionally, binds directly to 23S rRNA. The L1 stalk is quite mobile in the ribosome, and is involved in E site tRNA release. In terms of biological role, protein L1 is also a translational repressor protein, it controls the translation of the L11 operon by binding to its mRNA. In Synechococcus sp. (strain WH7803), this protein is Large ribosomal subunit protein uL1.